A 1966-amino-acid polypeptide reads, in one-letter code: Histone-lysine N-methyltransferase SETD1B (1966 aa).

The span at M1–Q12 shows a compositional bias: basic residues. The disordered stretch occupies residues M1–N26. The tract at residues V68–G98 is interaction with WDR82. The region spanning D93 to K181 is the RRM domain. Disordered regions lie at residues G235–Q302, V357–M660, L675–A719, K963–L1462, P1501–A1541, Q1555–F1606, and A1636–L1668. Composition is skewed to polar residues over residues V243 to S259, T265 to P274, and P282 to F300. Pro residues-rich tracts occupy residues P432–E441 and G449–D458. A compositionally biased stretch (basic and acidic residues) spans E493–D521. Residues S531 to L543 are compositionally biased toward low complexity. The span at P592–P603 shows a compositional bias: pro residues. Over residues E637–M646 the composition is skewed to acidic residues. Residues L679–A719 are compositionally biased toward pro residues. 2 positions are modified to phosphoserine: S986 and S994. A compositionally biased stretch (basic and acidic residues) spans E995–K1015. A Phosphoserine modification is found at S1031. Low complexity predominate over residues L1041 to A1064. Acidic residues-rich tracts occupy residues K1067–E1087 and K1104–T1142. Low complexity predominate over residues S1148–S1174. Positions S1173–A1204 form a coiled coil. Acidic residues-rich tracts occupy residues S1175–A1197 and G1229–T1238. Residues S1265, S1283, and S1335 each carry the phosphoserine modification. Pro residues predominate over residues E1312–P1340. Positions P1383–T1425 are enriched in low complexity. Over residues P1501–P1514 the composition is skewed to pro residues. The span at M1515–R1524 shows a compositional bias: basic residues. Positions P1580–E1600 are enriched in pro residues. S1659 and S1663 each carry phosphoserine. Positions G1745–E1750 match the WDR5 interaction motif (WIN) motif. The interval S1767–E1800 is disordered. The short motif at R1798 to R1803 is the RxxxRR motif element. An SET domain is found at K1827–K1944. Y1943 lines the S-adenosyl-L-methionine pocket. In terms of domain architecture, Post-SET spans V1950 to N1966.

This sequence belongs to the class V-like SAM-binding methyltransferase superfamily. Component of the SET1B/COMPASS complex composed of the catalytic subunit SETD1B, WDR5, WDR82, RBBP5, ASH2L/ASH2, CXXC1/CFP1, HCFC1, DPY30 homotrimer and BOD1. Forms a core complex with the evolutionary conserved subcomplex WRAD composed of WDR5, RBBP5, ASH2L/ASH2 and DPY30 subunits; WRAD differentially stimulates the methyltransferase activity. Interacts with HCFC1 and ASH2L/ASH2. Interacts (via N-terminal region) with WDR82. Interacts (via the RRM domain) with hyperphosphorylated C-terminal domain (CTD) of RNA polymerase II large subunit (POLR2A) only in the presence of WDR82. Binds specifically to CTD heptad repeats phosphorylated on 'Ser-5' of each heptad. Interacts with RBM15. Interacts (via WIN motif) with WDR5.

It localises to the nucleus. The protein resides in the nucleus speckle. The protein localises to the chromosome. It is found in the cytoplasm. The catalysed reaction is L-lysyl(4)-[histone H3] + S-adenosyl-L-methionine = N(6)-methyl-L-lysyl(4)-[histone H3] + S-adenosyl-L-homocysteine + H(+). It carries out the reaction N(6)-methyl-L-lysyl(4)-[histone H3] + S-adenosyl-L-methionine = N(6),N(6)-dimethyl-L-lysyl(4)-[histone H3] + S-adenosyl-L-homocysteine + H(+). It catalyses the reaction N(6),N(6)-dimethyl-L-lysyl(4)-[histone H3] + S-adenosyl-L-methionine = N(6),N(6),N(6)-trimethyl-L-lysyl(4)-[histone H3] + S-adenosyl-L-homocysteine + H(+). Functionally, histone methyltransferase that catalyzes methyl group transfer from S-adenosyl-L-methionine to the epsilon-amino group of 'Lys-4' of histone H3 (H3K4) via a non-processive mechanism. Part of chromatin remodeling machinery, forms H3K4me1, H3K4me2 and H3K4me3 methylation marks at active chromatin sites where transcription and DNA repair take place. Plays an essential role in regulating the transcriptional programming of multipotent hematopoietic progenitor cells and lymphoid lineage specification during hematopoiesis. The sequence is that of Histone-lysine N-methyltransferase SETD1B (SETD1B) from Homo sapiens (Human).